The sequence spans 488 residues: ATP synthase subunit beta (488 aa).

164–171 (GGAGVGKT) provides a ligand contact to ATP.

This sequence belongs to the ATPase alpha/beta chains family. F-type ATPases have 2 components, CF(1) - the catalytic core - and CF(0) - the membrane proton channel. CF(1) has five subunits: alpha(3), beta(3), gamma(1), delta(1), epsilon(1). CF(0) has four main subunits: a(1), b(1), b'(1) and c(9-12).

The protein localises to the cellular thylakoid membrane. The enzyme catalyses ATP + H2O + 4 H(+)(in) = ADP + phosphate + 5 H(+)(out). In terms of biological role, produces ATP from ADP in the presence of a proton gradient across the membrane. The catalytic sites are hosted primarily by the beta subunits. The chain is ATP synthase subunit beta from Prochlorococcus marinus (strain NATL1A).